The following is a 276-amino-acid chain: MDAEIFSLDSLSIYKDINIASAKPSLKERKNIKHYALDYLSIDEKNNAPLFKTLLEDAMRVSSKEVLLIVGGSSFYLKSILEGLSDTPKISGEEAVKIEQEINSLANPYAFLKSIDPTSAFKIHPNDTYRIHKALEIFYSTHTPPSEYFKTNPKKPFEHAISLFALSIEKSALANNIKQRTKNMLDCGLIEEIKALYAQYPKDSQPFKAIGVKESILFLEKQLTLKKLEEAIISNTIQLAKRQNTFNKTQFNNLYTGSVGEVRHAILNHSKSAIKG.

Residues 9–12 (DSLS) are interaction with substrate tRNA.

Belongs to the IPP transferase family. In terms of assembly, monomer. The cofactor is Mg(2+).

The enzyme catalyses adenosine(37) in tRNA + dimethylallyl diphosphate = N(6)-dimethylallyladenosine(37) in tRNA + diphosphate. Catalyzes the transfer of a dimethylallyl group onto the adenine at position 37 in tRNAs that read codons beginning with uridine, leading to the formation of N6-(dimethylallyl)adenosine (i(6)A). The polypeptide is tRNA dimethylallyltransferase (miaA) (Helicobacter pylori (strain Shi470)).